The sequence spans 127 residues: Fluoride-specific ion channel FluC (127 aa).

4 helical membrane-spanning segments follow: residues 4 to 24 (SLLV…LLGM), 37 to 57 (TVVA…FLAA), 68 to 88 (LIIT…AETV), and 96 to 116 (LLWA…MTAA). Na(+)-binding residues include Gly-75 and Thr-78.

This sequence belongs to the fluoride channel Fluc/FEX (TC 1.A.43) family.

It is found in the cell inner membrane. The catalysed reaction is fluoride(in) = fluoride(out). With respect to regulation, na(+) is not transported, but it plays an essential structural role and its presence is essential for fluoride channel function. Functionally, fluoride-specific ion channel. Important for reducing fluoride concentration in the cell, thus reducing its toxicity. The polypeptide is Fluoride-specific ion channel FluC (Pseudomonas syringae pv. maculicola).